Consider the following 444-residue polypeptide: Ribosomal protein uS12 methylthiotransferase RimO (444 aa).

Residues I4 to E118 enclose the MTTase N-terminal domain. [4Fe-4S] cluster is bound by residues C13, C48, C81, C155, C159, and C162. The 233-residue stretch at T141–N373 folds into the Radical SAM core domain. A TRAM domain is found at A374–D440.

The protein belongs to the methylthiotransferase family. RimO subfamily. [4Fe-4S] cluster is required as a cofactor.

It localises to the cytoplasm. It catalyses the reaction L-aspartate(89)-[ribosomal protein uS12]-hydrogen + (sulfur carrier)-SH + AH2 + 2 S-adenosyl-L-methionine = 3-methylsulfanyl-L-aspartate(89)-[ribosomal protein uS12]-hydrogen + (sulfur carrier)-H + 5'-deoxyadenosine + L-methionine + A + S-adenosyl-L-homocysteine + 2 H(+). Its function is as follows. Catalyzes the methylthiolation of an aspartic acid residue of ribosomal protein uS12. The polypeptide is Ribosomal protein uS12 methylthiotransferase RimO (Clostridium tetani (strain Massachusetts / E88)).